Consider the following 305-residue polypeptide: Probable 4-deoxy-4-formamido-L-arabinose-phosphoundecaprenol deformylase ArnD (305 aa).

Residues 7–262 (TKVGLRIDVD…QAKENNIEFV (256 aa)) enclose the NodB homology domain.

The protein belongs to the polysaccharide deacetylase family. ArnD deformylase subfamily.

The catalysed reaction is 4-deoxy-4-formamido-alpha-L-arabinopyranosyl di-trans,octa-cis-undecaprenyl phosphate + H2O = 4-amino-4-deoxy-alpha-L-arabinopyranosyl di-trans,octa-cis-undecaprenyl phosphate + formate. Its pathway is glycolipid biosynthesis; 4-amino-4-deoxy-alpha-L-arabinose undecaprenyl phosphate biosynthesis; 4-amino-4-deoxy-alpha-L-arabinose undecaprenyl phosphate from UDP-4-deoxy-4-formamido-beta-L-arabinose and undecaprenyl phosphate: step 2/2. It participates in bacterial outer membrane biogenesis; lipopolysaccharide biosynthesis. Functionally, catalyzes the deformylation of 4-deoxy-4-formamido-L-arabinose-phosphoundecaprenol to 4-amino-4-deoxy-L-arabinose-phosphoundecaprenol. The modified arabinose is attached to lipid A and is required for resistance to polymyxin and cationic antimicrobial peptides. The sequence is that of Probable 4-deoxy-4-formamido-L-arabinose-phosphoundecaprenol deformylase ArnD from Shewanella sediminis (strain HAW-EB3).